A 1427-amino-acid chain; its full sequence is A disintegrin and metalloproteinase with thrombospondin motifs 13 (1427 aa).

The first 29 residues, 1–29 (MHQRHPRARCPPLCVAGILACGFLLGCWG), serve as a signal peptide directing secretion. The propeptide occupies 30 to 74 (PSHFQQSCLQALEPQAVSSYLSPGAPLKGRPPSPGFQRQRQRQRR). The interval 51-70 (SPGAPLKGRPPSPGFQRQRQ) is disordered. The 207-residue stretch at 80 to 286 (LHLELLVAVG…GRARCVWDPP (207 aa)) folds into the Peptidase M12B domain. Glu83 contributes to the Ca(2+) binding site. 2 N-linked (GlcNAc...) asparagine glycosylation sites follow: Asn142 and Asn146. 3 disulfide bridges follow: Cys155-Cys208, Cys202-Cys281, and Cys242-Cys265. Ca(2+) is bound by residues Asp173, Asp182, Glu184, Asp187, and Glu212. His224 contacts Zn(2+). The active site involves Glu225. Positions 228 and 234 each coordinate Zn(2+). Cys281 and Asp284 together coordinate Ca(2+). Residues 287-383 (RPQPGSAGHP…LVELTPIAAV (97 aa)) enclose the Disintegrin domain. 4 disulfides stabilise this stretch: Cys311-Cys337, Cys322-Cys347, Cys332-Cys366, and Cys360-Cys371. In terms of domain architecture, TSP type-1 1 spans 384 to 439 (HGRWSSWGPRSPCSRSCGGGVVTRRRQCNNPRPAFGGRACVGADLQAEMCNTQACE). A C-linked (Man) tryptophan glycan is attached at Trp387. Intrachain disulfides connect Cys396–Cys433, Cys400–Cys438, Cys411–Cys423, Cys450–Cys487, Cys483–Cys522, Cys508–Cys527, Cys532–Cys548, and Cys545–Cys555. An O-linked (Fuc...) serine glycan is attached at Ser399. A cysteine-rich region spans residues 440-556 (KTQLEFMSQQ…VCGGDNSTCS (117 aa)). The short motif at 498 to 500 (RGD) is the Cell attachment site element. Residues Asn552, Asn579, and Asn614 are each glycosylated (N-linked (GlcNAc...) asparagine). The segment at 556-685 (SPRKGSFTAG…TYFQPKPRQA (130 aa)) is spacer. Asn667 carries an N-linked (GlcNAc...) (complex) asparagine glycan. TSP type-1 domains lie at 682 to 730 (PRQA…SQQP), 742 to 805 (CPPY…QPCP), 808 to 859 (WEVS…PEPC), 896 to 950 (VWTP…QAVP), 951 to 1011 (CPAR…SLEP), 1012 to 1068 (CPPR…VPCL), and 1072 to 1131 (CTYR…GPCV). A glycan (O-linked (Fuc...) serine) is linked at Ser698. Asn707 carries N-linked (GlcNAc...) (complex) asparagine glycosylation. A glycan (O-linked (Fuc...) serine) is linked at Ser757. Residue Asn828 is glycosylated (N-linked (GlcNAc...) asparagine). Ser907, Ser965, Ser1027, and Ser1087 each carry an O-linked (Fuc...) serine glycan. CUB domains lie at 1192–1298 (CGRQ…FYRE) and 1299–1427 (CDMQ…KEGT). Asn1235 and Asn1354 each carry an N-linked (GlcNAc...) asparagine glycan.

Requires Zn(2+) as cofactor. Ca(2+) serves as cofactor. Post-translationally, glycosylated. O-fucosylated by POFUT2 on a serine or a threonine residue found within the consensus sequence C1-X(2)-(S/T)-C2-G of the TSP type-1 repeat domains where C1 and C2 are the first and second cysteine residue of the repeat, respectively. Fucosylated repeats can then be further glycosylated by the addition of a beta-1,3-glucose residue by the glucosyltransferase, B3GALTL. Fucosylation mediates the efficient secretion of ADAMTS13. May also be C-glycosylated on tryptophan residues within the consensus sequence W-X-X-W of the TPRs, and also N-glycosylated. These other glycosylations can also facilitate secretion. In terms of processing, the precursor is processed by a furin endopeptidase which cleaves off the pro-domain. In terms of tissue distribution, plasma. Expressed primarily in liver.

The protein resides in the secreted. The enzyme catalyses The enzyme cleaves the von Willebrand factor at bond 842-Tyr-|-Met-843 within the A2 domain.. With respect to regulation, zinc and calcium ions cooperatively modulate enzyme activity. The cleavage of the pro-domain is not required for protease activity. Dependence on calcium for proteolytic activity is mediated by the high affinity site. Cleaves the vWF multimers in plasma into smaller forms thereby controlling vWF-mediated platelet thrombus formation. This is A disintegrin and metalloproteinase with thrombospondin motifs 13 (ADAMTS13) from Homo sapiens (Human).